Here is a 108-residue protein sequence, read N- to C-terminus: Protein phosphatase 1 regulatory subunit 1C (108 aa).

The tract at residues 25–108 (AEQIRKRRPT…ASEREEKWNH (84 aa)) is disordered. Over residues 45 to 54 (NSPEIDEKRV) the composition is skewed to basic and acidic residues. The span at 55–73 (TNTQESQNASPKQRKQSVY) shows a compositional bias: polar residues. Over residues 99 to 108 (ASEREEKWNH) the composition is skewed to basic and acidic residues.

Belongs to the protein phosphatase inhibitor 1 family.

It localises to the cytoplasm. In terms of biological role, may increase cell susceptibility to TNF-induced apoptosis. The chain is Protein phosphatase 1 regulatory subunit 1C (Ppp1r1c) from Mus musculus (Mouse).